A 232-amino-acid polypeptide reads, in one-letter code: Nucleoside diphosphate kinase 2, chloroplastic (232 aa).

A chloroplast-targeting transit peptide spans 1–79 (MGCLSVVGAS…TRIFLPHLVA (79 aa)). Lys92, Phe140, Arg168, Thr174, Arg185, and Asn195 together coordinate ATP. His198 (pros-phosphohistidine intermediate) is an active-site residue.

It belongs to the NDK family. Mg(2+) serves as cofactor.

It is found in the plastid. It localises to the chloroplast. The catalysed reaction is a 2'-deoxyribonucleoside 5'-diphosphate + ATP = a 2'-deoxyribonucleoside 5'-triphosphate + ADP. The enzyme catalyses a ribonucleoside 5'-diphosphate + ATP = a ribonucleoside 5'-triphosphate + ADP. Its function is as follows. Major role in the synthesis of nucleoside triphosphates other than ATP. The ATP gamma phosphate is transferred to the NDP beta phosphate via a ping-pong mechanism, using a phosphorylated active-site intermediate. The sequence is that of Nucleoside diphosphate kinase 2, chloroplastic from Nicotiana tabacum (Common tobacco).